The chain runs to 380 residues: Forkhead box protein F1 (380 aa).

Positions 1–19 (MTAEVQQPSVQTPAHSSPM) are enriched in polar residues. A disordered region spans residues 1 to 49 (MTAEVQQPSVQTPAHSSPMTEKPVQTPVMETSSSSSSTKAKKTNAGIRR). The fork-head DNA-binding region spans 52 to 146 (KPPYSYIALI…EEGSFRRRPR (95 aa)).

It is found in the nucleus. The sequence is that of Forkhead box protein F1 (foxf1) from Danio rerio (Zebrafish).